A 261-amino-acid chain; its full sequence is Bidirectional sugar transporter SWEET1b (261 aa).

Topologically, residues 1–6 (MEDLAK) are extracellular. Residues 7 to 27 (FLFGVSGNVIALFLFLSPVPT) form a helical membrane-spanning segment. In terms of domain architecture, MtN3/slv 1 spans 7-95 (FLFGVSGNVI…VVFLVFASTH (89 aa)). Residues 28–42 (FWRIIRRKSTEDFSG) are Cytoplasmic-facing. The helical transmembrane segment at 43-63 (VPYNMTLINCLLSAWYGLPFV) threads the bilayer. Residues 64-71 (SPNNILVS) are Extracellular-facing. The helical transmembrane segment at 72–92 (TINGAGAVIETAYVVVFLVFA) threads the bilayer. Residues 93–101 (STHKTRLRT) lie on the Cytoplasmic side of the membrane. A helical membrane pass occupies residues 102–122 (LGLAAAVASVFAAVALVSLLA). Topologically, residues 123-129 (LHGQHRK) are extracellular. The chain crosses the membrane as a helical span at residues 130–150 (LLCGVAATVCSICMYASPLSI). The MtN3/slv 2 domain occupies 133–215 (GVAATVCSIC…VLYAIYRNNK (83 aa)). The Cytoplasmic segment spans residues 151-164 (MRLVIKTKSVEYMP). The helical transmembrane segment at 165–185 (FLMSLAVFLCGTSWFIYGLLG) threads the bilayer. Topologically, residues 186–189 (RDPF) are extracellular. The chain crosses the membrane as a helical span at residues 190 to 210 (VTIPNGCGSFLGAVQLVLYAI). The Cytoplasmic segment spans residues 211–261 (YRNNKGAGGGSGGKQAGDDDVEMAEGRNNKVADGGAADDDSTAGGKAGTEV). The disordered stretch occupies residues 218-261 (GGGSGGKQAGDDDVEMAEGRNNKVADGGAADDDSTAGGKAGTEV).

This sequence belongs to the SWEET sugar transporter family. In terms of assembly, forms homodimers. As to expression, highly expressed in leaves. Expressed at very low levels in roots, stems and panicles.

The protein resides in the cell membrane. It carries out the reaction D-glucose(out) = D-glucose(in). The enzyme catalyses D-galactose(in) = D-galactose(out). Functionally, mediates transport of sugars across the plasma membrane. Can transport glucose and galactose, but not fructose, mannose and sucrose. This Oryza sativa subsp. japonica (Rice) protein is Bidirectional sugar transporter SWEET1b (SWEET1B).